Consider the following 61-residue polypeptide: Large ribosomal subunit protein bL28A (61 aa).

This sequence belongs to the bacterial ribosomal protein bL28 family.

The polypeptide is Large ribosomal subunit protein bL28A (rpmB1) (Streptomyces coelicolor (strain ATCC BAA-471 / A3(2) / M145)).